We begin with the raw amino-acid sequence, 447 residues long: Phosphoglucosamine mutase (447 aa).

Residue serine 100 is the Phosphoserine intermediate of the active site. Mg(2+) contacts are provided by serine 100, aspartate 240, aspartate 242, and aspartate 244. A Phosphoserine modification is found at serine 100.

Belongs to the phosphohexose mutase family. Mg(2+) is required as a cofactor. Post-translationally, activated by phosphorylation.

The enzyme catalyses alpha-D-glucosamine 1-phosphate = D-glucosamine 6-phosphate. Catalyzes the conversion of glucosamine-6-phosphate to glucosamine-1-phosphate. In Clostridium botulinum (strain Eklund 17B / Type B), this protein is Phosphoglucosamine mutase.